The primary structure comprises 321 residues: Methionyl-tRNA formyltransferase (321 aa).

Residue 111-114 (GLLP) coordinates (6S)-5,6,7,8-tetrahydrofolate.

Belongs to the Fmt family.

It catalyses the reaction L-methionyl-tRNA(fMet) + (6R)-10-formyltetrahydrofolate = N-formyl-L-methionyl-tRNA(fMet) + (6S)-5,6,7,8-tetrahydrofolate + H(+). In terms of biological role, attaches a formyl group to the free amino group of methionyl-tRNA(fMet). The formyl group appears to play a dual role in the initiator identity of N-formylmethionyl-tRNA by promoting its recognition by IF2 and preventing the misappropriation of this tRNA by the elongation apparatus. The chain is Methionyl-tRNA formyltransferase from Chlamydia abortus (strain DSM 27085 / S26/3) (Chlamydophila abortus).